Here is a 314-residue protein sequence, read N- to C-terminus: Homoserine kinase (314 aa).

96-106 (PIGSGLGSSAC) contacts ATP.

The protein belongs to the GHMP kinase family. Homoserine kinase subfamily.

The protein localises to the cytoplasm. It carries out the reaction L-homoserine + ATP = O-phospho-L-homoserine + ADP + H(+). The protein operates within amino-acid biosynthesis; L-threonine biosynthesis; L-threonine from L-aspartate: step 4/5. Functionally, catalyzes the ATP-dependent phosphorylation of L-homoserine to L-homoserine phosphate. This Histophilus somni (strain 129Pt) (Haemophilus somnus) protein is Homoserine kinase.